Consider the following 206-residue polypeptide: Holliday junction branch migration complex subunit RuvA (206 aa).

The domain I stretch occupies residues 1-64; that stretch reads MIGRLSGTIL…EDAQLLYGFN (64 aa). The segment at 65–143 is domain II; that stretch reads KKSERELFRE…GWGEGDLFTP (79 aa). The tract at residues 144–157 is flexible linker; that stretch reads ASDAAASNAEIQKY. Positions 158–206 are domain III; it reads SSARAEDEAVSALIALGYKALQAAKVVSQVVKPEMSSENIIREALRSMV.

Belongs to the RuvA family. Homotetramer. Forms an RuvA(8)-RuvB(12)-Holliday junction (HJ) complex. HJ DNA is sandwiched between 2 RuvA tetramers; dsDNA enters through RuvA and exits via RuvB. An RuvB hexamer assembles on each DNA strand where it exits the tetramer. Each RuvB hexamer is contacted by two RuvA subunits (via domain III) on 2 adjacent RuvB subunits; this complex drives branch migration. In the full resolvosome a probable DNA-RuvA(4)-RuvB(12)-RuvC(2) complex forms which resolves the HJ.

It localises to the cytoplasm. Functionally, the RuvA-RuvB-RuvC complex processes Holliday junction (HJ) DNA during genetic recombination and DNA repair, while the RuvA-RuvB complex plays an important role in the rescue of blocked DNA replication forks via replication fork reversal (RFR). RuvA specifically binds to HJ cruciform DNA, conferring on it an open structure. The RuvB hexamer acts as an ATP-dependent pump, pulling dsDNA into and through the RuvAB complex. HJ branch migration allows RuvC to scan DNA until it finds its consensus sequence, where it cleaves and resolves the cruciform DNA. The polypeptide is Holliday junction branch migration complex subunit RuvA (Photobacterium profundum (strain SS9)).